Consider the following 370-residue polypeptide: MISLNSSSIPSSQTKKVVIGMSGGVDSSVAAWMLKEQGFEVIGLFMKNWEDDDNDEYCSARQDWLDVVSVADMIGIDVEAVNFAAEYRERVFADFLCEYAAGRTPNPDVLCNAEIKFKAFLDHAMSLGADAIATGHYARVRHEGGRVQLLKAVDASKDQSYFLHRLTQQQLSKVMFPLGEIPKTEVRKIAEQIGLHNAKKKDSTGICFIGERPFREFLNRYLPRVPGPIKTPEGKTVGEHMGLAFFTLGQRKGIGLGGSQDGNGDAWYVARKDMANNTLYVAQGHEHPWLLANKLSAVDASWVSGAAPEPGSYSAKTRYRQTDSACTYIADIDTNNFSLSFPEAQWAVTPGQSAVLYDGDICLGGGIIST.

Residues 20–27 (GMSGGVDS) and Met46 contribute to the ATP site. The tract at residues 106–108 (NPD) is interaction with target base in tRNA. Catalysis depends on Cys111, which acts as the Nucleophile. Cys111 and Cys207 are oxidised to a cystine. An ATP-binding site is contributed by Gly135. An interaction with tRNA region spans residues 157 to 159 (KDQ). The active-site Cysteine persulfide intermediate is Cys207. An interaction with tRNA region spans residues 318–319 (RY).

It belongs to the MnmA/TRMU family.

Its subcellular location is the cytoplasm. It catalyses the reaction S-sulfanyl-L-cysteinyl-[protein] + uridine(34) in tRNA + AH2 + ATP = 2-thiouridine(34) in tRNA + L-cysteinyl-[protein] + A + AMP + diphosphate + H(+). Catalyzes the 2-thiolation of uridine at the wobble position (U34) of tRNA, leading to the formation of s(2)U34. The sequence is that of tRNA-specific 2-thiouridylase MnmA from Polynucleobacter asymbioticus (strain DSM 18221 / CIP 109841 / QLW-P1DMWA-1) (Polynucleobacter necessarius subsp. asymbioticus).